A 752-amino-acid chain; its full sequence is BCLAF1 and THRAP3 family member 3 (752 aa).

The segment covering 1 to 13 has biased composition (basic residues); the sequence is MARSRSRSPRWKQ. Disordered stretches follow at residues 1–114, 132–177, and 190–252; these read MARS…YMPT, PTVQ…QMSL, and DELR…DPAR. A phosphoserine mark is found at serine 15 and serine 17. A compositionally biased stretch (basic and acidic residues) spans 23–57; it reads FEYHEERHFHGHYDPEYRHDQQRPFTWRMDDEKHG. Serine 78 and serine 80 each carry phosphoserine. The span at 85 to 109 shows a compositional bias: basic and acidic residues; it reads PVEKFDTYKPHQEYFPGRGDDDRRS. Residues 190-199 show a composition bias toward basic and acidic residues; that stretch reads DELRHQRVQE. Residue serine 205 is modified to Phosphoserine. Basic and acidic residues-rich tracts occupy residues 222-231 and 238-252; these read RYPEDHDFRK and RPTD…DPAR. Lysine 416 is covalently cross-linked (Glycyl lysine isopeptide (Lys-Gly) (interchain with G-Cter in SUMO2)). Residue serine 592 is modified to Phosphoserine.

It belongs to the BCLAF1/THRAP3 family.

The protein resides in the mitochondrion. This Mus musculus (Mouse) protein is BCLAF1 and THRAP3 family member 3.